The primary structure comprises 156 residues: Small ribosomal subunit protein uS7 (156 aa).

It belongs to the universal ribosomal protein uS7 family. In terms of assembly, part of the 30S ribosomal subunit. Contacts proteins S9 and S11.

Its function is as follows. One of the primary rRNA binding proteins, it binds directly to 16S rRNA where it nucleates assembly of the head domain of the 30S subunit. Is located at the subunit interface close to the decoding center, probably blocks exit of the E-site tRNA. The chain is Small ribosomal subunit protein uS7 from Bacillus cytotoxicus (strain DSM 22905 / CIP 110041 / 391-98 / NVH 391-98).